We begin with the raw amino-acid sequence, 302 residues long: GTPase Era (302 aa).

The Era-type G domain maps to Arg-10–Glu-178. Residues Gly-18 to Ser-25 form a G1 region. Residue Gly-18 to Ser-25 coordinates GTP. Positions Gln-44–His-48 are G2. The G3 stretch occupies residues Asp-65–Gly-68. GTP is bound by residues Asp-65–Met-69 and Asn-127–Asp-130. The interval Asn-127–Asp-130 is G4. Residues Ile-157 to Ala-159 are G5. The KH type-2 domain maps to Val-201–Gly-285.

The protein belongs to the TRAFAC class TrmE-Era-EngA-EngB-Septin-like GTPase superfamily. Era GTPase family. Monomer.

It is found in the cytoplasm. Its subcellular location is the cell inner membrane. Its function is as follows. An essential GTPase that binds both GDP and GTP, with rapid nucleotide exchange. Plays a role in 16S rRNA processing and 30S ribosomal subunit biogenesis and possibly also in cell cycle regulation and energy metabolism. The polypeptide is GTPase Era (Pseudomonas putida (strain ATCC 47054 / DSM 6125 / CFBP 8728 / NCIMB 11950 / KT2440)).